A 62-amino-acid chain; its full sequence is Conotoxin Sr5.7 (62 aa).

A signal peptide spans 1 to 22; the sequence is MRCLPVFVILLLLIASAPSVDA. The propeptide occupies 23-44; it reads QLKTKDDVPLASFHDNAKGTQH.

This sequence belongs to the conotoxin T superfamily. Post-translationally, contains 2 disulfide bonds that can be either 'C1-C3, C2-C4' or 'C1-C4, C2-C3', since these disulfide connectivities have been observed for conotoxins with cysteine framework V (for examples, see AC P0DQQ7 and AC P81755). As to expression, expressed by the venom duct.

It localises to the secreted. The sequence is that of Conotoxin Sr5.7 from Conus spurius (Alphabet cone).